Consider the following 880-residue polypeptide: Pentatricopeptide repeat-containing protein At3g07290, mitochondrial (880 aa).

The transit peptide at methionine 1–phenylalanine 89 directs the protein to the mitochondrion. PPR repeat units lie at residues asparagine 159–valine 193, glycine 194–leucine 228, aspartate 229–glutamate 259, asparagine 265–proline 299, serine 300–proline 334, asparagine 335–proline 369, serine 370–proline 404, asparagine 405–proline 439, aspartate 440–proline 474, aspartate 475–leucine 509, aspartate 510–threonine 544, threonine 545–proline 579, serine 580–proline 614, asparagine 615–proline 649, asparagine 650–leucine 684, asparagine 685–proline 721, isoleucine 738–arginine 768, leucine 772–proline 806, and serine 807–glutamate 842.

It belongs to the PPR family. P subfamily.

The protein resides in the mitochondrion. This chain is Pentatricopeptide repeat-containing protein At3g07290, mitochondrial, found in Arabidopsis thaliana (Mouse-ear cress).